The following is a 608-amino-acid chain: NADH-quinone oxidoreductase subunit C/D (608 aa).

The NADH dehydrogenase I subunit C stretch occupies residues 1–199 (MSAASSLAPQ…EPFHLSTEKE (199 aa)). The NADH dehydrogenase I subunit D stretch occupies residues 223-608 (DFMFLNLGPN…IDFVMADVDR (386 aa)).

It in the N-terminal section; belongs to the complex I 30 kDa subunit family. The protein in the C-terminal section; belongs to the complex I 49 kDa subunit family. In terms of assembly, NDH-1 is composed of 13 different subunits. Subunits NuoB, CD, E, F, and G constitute the peripheral sector of the complex.

The protein resides in the cell inner membrane. It carries out the reaction a quinone + NADH + 5 H(+)(in) = a quinol + NAD(+) + 4 H(+)(out). Its function is as follows. NDH-1 shuttles electrons from NADH, via FMN and iron-sulfur (Fe-S) centers, to quinones in the respiratory chain. The immediate electron acceptor for the enzyme in this species is believed to be ubiquinone. Couples the redox reaction to proton translocation (for every two electrons transferred, four hydrogen ions are translocated across the cytoplasmic membrane), and thus conserves the redox energy in a proton gradient. This is NADH-quinone oxidoreductase subunit C/D from Nitrosospira multiformis (strain ATCC 25196 / NCIMB 11849 / C 71).